Consider the following 797-residue polypeptide: Outer membrane protein assembly factor BamA (797 aa).

The first 21 residues, 1–21 (MKLKQIASALMMLGISPLALA), serve as a signal peptide directing secretion. 5 POTRA domains span residues 23–90 (FTIQ…VIER), 91–171 (PTIG…IDEG), 174–262 (AKIT…VHEG), 265–344 (FRWG…IEPG), and 347–421 (IYVN…LTER).

Belongs to the BamA family. In terms of assembly, part of the Bam complex.

It is found in the cell outer membrane. Part of the outer membrane protein assembly complex, which is involved in assembly and insertion of beta-barrel proteins into the outer membrane. The protein is Outer membrane protein assembly factor BamA of Neisseria meningitidis serogroup B (strain ATCC BAA-335 / MC58).